Reading from the N-terminus, the 118-residue chain is Large ribosomal subunit protein uL18 (118 aa).

It belongs to the universal ribosomal protein uL18 family. As to quaternary structure, part of the 50S ribosomal subunit; part of the 5S rRNA/L5/L18/L25 subcomplex. Contacts the 5S and 23S rRNAs.

This is one of the proteins that bind and probably mediate the attachment of the 5S RNA into the large ribosomal subunit, where it forms part of the central protuberance. This chain is Large ribosomal subunit protein uL18, found in Zymomonas mobilis subsp. mobilis (strain ATCC 31821 / ZM4 / CP4).